Consider the following 352-residue polypeptide: tRNA N6-adenosine threonylcarbamoyltransferase (352 aa).

2 residues coordinate Fe cation: H117 and H121. Residues L140–G144, D173, G186, and N287 each bind substrate. D315 contacts Fe cation.

Belongs to the KAE1 / TsaD family. Requires Fe(2+) as cofactor.

It is found in the cytoplasm. The enzyme catalyses L-threonylcarbamoyladenylate + adenosine(37) in tRNA = N(6)-L-threonylcarbamoyladenosine(37) in tRNA + AMP + H(+). Required for the formation of a threonylcarbamoyl group on adenosine at position 37 (t(6)A37) in tRNAs that read codons beginning with adenine. Is involved in the transfer of the threonylcarbamoyl moiety of threonylcarbamoyl-AMP (TC-AMP) to the N6 group of A37, together with TsaE and TsaB. TsaD likely plays a direct catalytic role in this reaction. This is tRNA N6-adenosine threonylcarbamoyltransferase from Psychrobacter cryohalolentis (strain ATCC BAA-1226 / DSM 17306 / VKM B-2378 / K5).